A 1774-amino-acid chain; its full sequence is Kinesin-like protein KIF20B (1774 aa).

The Kinesin motor domain maps to 58 to 477 (YLQVCLRIRP…LKFSTTAQRV (420 aa)). Residue 152–159 (GLTNSGKT) coordinates ATP. Position 486 is a phosphoserine (Ser-486). Coiled coils occupy residues 525–601 (EDVL…KIRE) and 705–747 (QEAI…LVQA). A compositionally biased stretch (acidic residues) spans 538–555 (EENEETQNMETELTDEDS). 2 disordered regions span residues 538 to 557 (EENEETQNMETELTDEDSDK) and 740 to 799 (ESNS…PPAK). Over residues 741-778 (SNSLVQALKTSSKVDTSLTSNKSTCNETSEMPKNSRAQ) the composition is skewed to polar residues. The span at 779-788 (THSERKRLNE) shows a compositional bias: basic and acidic residues. The stretch at 824–946 (SEVVEGNRVL…QMQTKIDELR (123 aa)) forms a coiled coil. Residue Ser-950 is modified to Phosphoserine. The interval 1002–1059 (ENSFHASIEAIWEECKEIVKASSKKSHQIQGLEEQIEKLQVEVKGYREENSDLRAQES) is necessary and sufficient for interaction with SHTN1. Positions 1021–1507 (KASSKKSHQI…DEEIQELRKA (487 aa)) form a coiled coil. Phosphoserine occurs at positions 1107 and 1542. The segment at 1514 to 1774 (TENQTMNPKP…KRRLRTRTAK (261 aa)) is interaction with PIN1. Phosphothreonine; by CDK1 is present on Thr-1598. Ser-1612 bears the Phosphoserine mark. A disordered region spans residues 1625 to 1663 (KKNSTPRSNVKFPVSEHRNSPVKKEQKVSVGPSSKKTYS). Positions 1638 to 1651 (VSEHRNSPVKKEQK) are enriched in basic and acidic residues. Phosphoserine occurs at positions 1669 and 1694.

It belongs to the TRAFAC class myosin-kinesin ATPase superfamily. Kinesin family. As to quaternary structure, oligomerizes (via kinesin motor domain). Associates with microtubules. Interacts (via C-terminal globular tail region) with PIN1 (via WW domain). Interacts with PRC1. Interacts with SHTN1 (via N-terminus); the interaction is direct and promotes the association of SHTN1 to microtubules in primary neurons. Associates with microtubules. Post-translationally, phosphorylated during mitosis by CDK1. As to expression, expressed in the brain (at protein level).

It is found in the nucleus. The protein localises to the cytoplasm. Its subcellular location is the cytoskeleton. The protein resides in the microtubule organizing center. It localises to the centrosome. It is found in the nucleolus. The protein localises to the nucleoplasm. Its subcellular location is the spindle. The protein resides in the spindle pole. It localises to the midbody. It is found in the cell projection. The protein localises to the axon. Its subcellular location is the growth cone. Its function is as follows. Plus-end-directed motor enzyme that is required for completion of cytokinesis. Required for proper midbody organization and abscission in polarized cortical stem cells. Plays a role in the regulation of neuronal polarization by mediating the transport of specific cargos. Participates in the mobilization of SHTN1 and in the accumulation of PIP3 in the growth cone of primary hippocampal neurons in a tubulin and actin-dependent manner. In the developing telencephalon, cooperates with SHTN1 to promote both the transition from the multipolar to the bipolar stage and the radial migration of cortical neurons from the ventricular zone toward the superficial layer of the neocortex. Involved in cerebral cortex growth. Acts as an oncogene for promoting bladder cancer cells proliferation, apoptosis inhibition and carcinogenic progression. This is Kinesin-like protein KIF20B from Mus musculus (Mouse).